Here is a 641-residue protein sequence, read N- to C-terminus: Phosphomethylpyrimidine synthase (641 aa).

Polar residues predominate over residues 1-12; sequence MTDTSTQNTATP. The interval 1–25 is disordered; that stretch reads MTDTSTQNTATPTDEYGAEIHPKHS. Substrate is bound by residues asparagine 200, methionine 229, tyrosine 258, histidine 294, 314-316, 355-358, and glutamate 394; these read SRG and DGLR. Histidine 398 serves as a coordination point for Zn(2+). Tyrosine 421 is a substrate binding site. Histidine 462 provides a ligand contact to Zn(2+). Residues cysteine 542, cysteine 545, and cysteine 550 each coordinate [4Fe-4S] cluster.

Belongs to the ThiC family. [4Fe-4S] cluster serves as cofactor.

It catalyses the reaction 5-amino-1-(5-phospho-beta-D-ribosyl)imidazole + S-adenosyl-L-methionine = 4-amino-2-methyl-5-(phosphooxymethyl)pyrimidine + CO + 5'-deoxyadenosine + formate + L-methionine + 3 H(+). The protein operates within cofactor biosynthesis; thiamine diphosphate biosynthesis. Catalyzes the synthesis of the hydroxymethylpyrimidine phosphate (HMP-P) moiety of thiamine from aminoimidazole ribotide (AIR) in a radical S-adenosyl-L-methionine (SAM)-dependent reaction. The sequence is that of Phosphomethylpyrimidine synthase from Corynebacterium jeikeium (strain K411).